Consider the following 124-residue polypeptide: Holo-[acyl-carrier-protein] synthase (124 aa).

Mg(2+) is bound by residues D8 and E56.

Belongs to the P-Pant transferase superfamily. AcpS family. Mg(2+) is required as a cofactor.

It is found in the cytoplasm. The enzyme catalyses apo-[ACP] + CoA = holo-[ACP] + adenosine 3',5'-bisphosphate + H(+). Its function is as follows. Transfers the 4'-phosphopantetheine moiety from coenzyme A to a Ser of acyl-carrier-protein. The protein is Holo-[acyl-carrier-protein] synthase of Nitratidesulfovibrio vulgaris (strain ATCC 29579 / DSM 644 / CCUG 34227 / NCIMB 8303 / VKM B-1760 / Hildenborough) (Desulfovibrio vulgaris).